The chain runs to 801 residues: Mitochondrial intermediate peptidase (801 aa).

A mitochondrion-targeting transit peptide spans 1–41 (MKDQLLVPLRRRPWTCQKCLQRLQLPRHQTRRSFETAASPF). His-564 serves as a coordination point for Zn(2+). Glu-565 is a catalytic residue. His-568 and His-571 together coordinate Zn(2+).

This sequence belongs to the peptidase M3 family. The cofactor is Zn(2+).

Its subcellular location is the mitochondrion matrix. It carries out the reaction Release of an N-terminal octapeptide as second stage of processing of some proteins imported into the mitochondrion.. Functionally, cleaves proteins, imported into the mitochondrion, to their mature size. While most mitochondrial precursor proteins are processed to the mature form in one step by mitochondrial processing peptidase (MPP), the sequential cleavage by MIP of an octapeptide after initial processing by MPP is a required step for a subgroup of nuclear-encoded precursor proteins destined for the matrix or the inner membrane. The protein is Mitochondrial intermediate peptidase (oct1) of Aspergillus fumigatus (strain CBS 144.89 / FGSC A1163 / CEA10) (Neosartorya fumigata).